A 593-amino-acid polypeptide reads, in one-letter code: Genetic interactor of prohibitins 3, mitochondrial (593 aa).

Residues M1–P61 constitute a mitochondrion transit peptide. A CP-type G domain is found at V142–N349.

It belongs to the TRAFAC class YlqF/YawG GTPase family. GEP3 subfamily.

The protein resides in the mitochondrion. May be involved in the mitochondrial lipid metabolism. This Debaryomyces hansenii (strain ATCC 36239 / CBS 767 / BCRC 21394 / JCM 1990 / NBRC 0083 / IGC 2968) (Yeast) protein is Genetic interactor of prohibitins 3, mitochondrial (GEP3).